The primary structure comprises 420 residues: UDP-N-acetyl-D-mannosamine dehydrogenase (420 aa).

NAD(+)-binding residues include tyrosine 13, isoleucine 14, aspartate 33, threonine 85, and threonine 126. Residues arginine 160, valine 161, lysine 212, asparagine 216, arginine 219, histidine 250, arginine 252, and glycine 263 each coordinate UDP-N-acetyl-alpha-D-mannosaminouronate. Lysine 212 functions as the Proton donor/acceptor in the catalytic mechanism. Catalysis depends on cysteine 266, which acts as the Nucleophile. Phenylalanine 330 and lysine 331 together coordinate UDP-N-acetyl-alpha-D-mannosaminouronate. Arginine 338 provides a ligand contact to NAD(+). Position 416 (lysine 416) interacts with UDP-N-acetyl-alpha-D-mannosaminouronate.

The protein belongs to the UDP-glucose/GDP-mannose dehydrogenase family. WecC subfamily. Homodimer.

The enzyme catalyses UDP-N-acetyl-alpha-D-mannosamine + 2 NAD(+) + H2O = UDP-N-acetyl-alpha-D-mannosaminouronate + 2 NADH + 3 H(+). It functions in the pathway bacterial outer membrane biogenesis; enterobacterial common antigen biosynthesis. Catalyzes the four-electron oxidation of UDP-N-acetyl-D-mannosamine (UDP-ManNAc), reducing NAD(+) and releasing UDP-N-acetylmannosaminuronic acid (UDP-ManNAcA). The sequence is that of UDP-N-acetyl-D-mannosamine dehydrogenase from Salmonella typhi.